Consider the following 462-residue polypeptide: Retinoic acid receptor alpha (462 aa).

Residues 1–87 (MASNSSSCPT…PPPLPRIYKP (87 aa)) form a modulating region. The segment covering 52 to 64 (GYSTPSPATIETQ) has biased composition (polar residues). Positions 52–77 (GYSTPSPATIETQSSSSEEIVPSPPS) are disordered. A Phosphoserine; by CDK7 modification is found at Ser77. 2 NR C4-type zinc fingers span residues 88–108 (CFVC…CEGC) and 124–148 (CHRD…LQKC). The nuclear receptor DNA-binding region spans 88–153 (CFVCQDKSSG…RLQKCFDVGM (66 aa)). Ser96 bears the Phosphoserine; by PKB/AKT1 mark. The interval 154–182 (SKESVRNDRNKKKKEAPKPECSESYTLTP) is hinge. Glycyl lysine isopeptide (Lys-Gly) (interchain with G-Cter in SUMO) cross-links involve residues Lys166 and Lys171. One can recognise an NR LBD domain in the interval 183-417 (EVGELIEKVR…PLIQEMLENS (235 aa)). At Ser219 the chain carries Phosphoserine; by PKA. All-trans-retinoate is bound at residue Cys235. Residues 254 to 258 (IADQI) carry the UBR5-degron motif. Position 287 (Ser287) interacts with all-trans-retinoate. Lys347 is subject to N6,N6,N6-trimethyllysine. A Phosphoserine; by PKA and RPS6KA5 modification is found at Ser369. A Glycyl lysine isopeptide (Lys-Gly) (interchain with G-Cter in SUMO) cross-link involves residue Lys399. Positions 404–419 (GSMPPLIQEMLENSEG) are required for binding corepressor NCOR1. The 9aaTAD signature appears at 408-416 (PLIQEMLEN). The disordered stretch occupies residues 420 to 462 (LDTLSGQSGGGTRDGGGLAPPPGSCSPSLSPSSHRSSPATQSP). Gly residues predominate over residues 426-437 (QSGGGTRDGGGL). The segment covering 444–462 (CSPSLSPSSHRSSPATQSP) has biased composition (low complexity).

The protein belongs to the nuclear hormone receptor family. NR1 subfamily. In terms of assembly, heterodimer; with RXRA. Binds DNA preferentially as a heterodimer. RXRA serves as enhancer to induce RARA binding to RARE. Interacts with RXRG. Interacts with NCOA3 and NCOA6 coactivators, leading to a strong increase of transcription of target genes. Interacts with NCOA7; the interaction requires ligand-binding. Interacts (via the ligand-binding domain) with PRAME; interaction is direct and ligand (retinoic acid)-dependent. Interacts with PRKAR1A; the interaction negatively regulates RARA transcriptional activity. Interacts with NCOR1; the interaction occurs in the absence of ligand and represses transcriptional activity. Interacts with NCOR2. Interacts with PRMT2. Interacts with LRIF1. Interacts with ASXL1 and NCOA1. Interacts with ACTN4. Interacts with CDK7; the interaction is enhanced by interaction with GTF2H3. Interacts with GTF2H3; the interaction requires prior phosphorylation on Ser-369 which then enhances interaction with CDK7. In a complex with HDAC3, HDAC5 and HDAC7; the HDACs serve as corepressors of RARA, causing its deacetylation and inhibition of RARE DNA element binding; association with HDAC3, HDAC5 and HDAC7 is increased upon oscillatory shear stress. In the absence of hormonal ligand, interacts with TACC1. In terms of processing, phosphorylated on serine and threonine residues. Phosphorylation does not change during cell cycle. Phosphorylation on Ser-77 is crucial for the N-terminal AF1 transcriptional activity. Under stress conditions, MAPK8 enhances phosphorylation on Thr-181, Ser-445 and Ser-461 leading to RARA ubiquitination and degradation. Phosphorylation by AKT1 inhibits the transactivation activity. On retinoic acid stimulation, phosphorylation on Ser-369 by RPS6KA5 promotes interaction with GTF2H3 and the CDK7-mediated phosphorylation of Ser-77. Post-translationally, ubiquitinated by UBR5, leading to its degradation: UBR5 specifically recognizes and binds ligand-bound RARA when it is not associated with coactivators (NCOAs). In presence of NCOAs, the UBR5-degron is not accessible, preventing its ubiquitination and degradation. Sumoylated with SUMO2, mainly on Lys-399 which is also required for SENP6 binding. On all-trans retinoic acid (ATRA) binding, a conformational change may occur that allows sumoylation on two additional site, Lys-166 and Lys-171. Probably desumoylated by SENP6. Sumoylation levels determine nuclear localization and regulate ATRA-mediated transcriptional activity. In terms of processing, acetylated; acetylation is increased upon pulsatile shear stress and decreased upon oscillatory shear stress. In terms of tissue distribution, expressed in Sertoli cells and germ cells.

It localises to the nucleus. It is found in the cytoplasm. Its function is as follows. Receptor for retinoic acid. Retinoic acid receptors bind as heterodimers to their target response elements in response to their ligands, all-trans or 9-cis retinoic acid, and regulate gene expression in various biological processes. The RXR/RAR heterodimers bind to the retinoic acid response elements (RARE) composed of tandem 5'-AGGTCA-3' sites known as DR1-DR5. In the absence of ligand, the RXR-RAR heterodimers associate with a multiprotein complex containing transcription corepressors that induce histone deacetylation, chromatin condensation and transcriptional suppression. On ligand binding, the corepressors dissociate from the receptors and associate with the coactivators leading to transcriptional activation. Formation of heterocomplex with histone deacetylases might lead to inhibition of RARE DNA element binding and to transcriptional repression. Transcriptional activation and RARE DNA element binding might be supported by the transcription factor KLF2. RARA plays an essential role in the regulation of retinoic acid-induced germ cell development during spermatogenesis. Has a role in the survival of early spermatocytes at the beginning prophase of meiosis. In Sertoli cells, may promote the survival and development of early meiotic prophase spermatocytes. In concert with RARG, required for skeletal growth, matrix homeostasis and growth plate function. Together with RXRA, positively regulates microRNA-10a expression, thereby inhibiting the GATA6/VCAM1 signaling response to pulsatile shear stress in vascular endothelial cells. In association with HDAC3, HDAC5 and HDAC7 corepressors, plays a role in the repression of microRNA-10a and thereby promotes the inflammatory response. This Mus musculus (Mouse) protein is Retinoic acid receptor alpha (Rara).